Consider the following 329-residue polypeptide: Nitrogenase iron-iron protein beta chain (329 aa).

Residues C20, C45, C104, and S143 each contribute to the [8Fe-7S] cluster site. The interval 213–288 (SADGSLVSHG…EEGDGKPIPQ (76 aa)) is disordered. The span at 257–271 (RSRRSSARPRSHPQY) shows a compositional bias: basic residues.

This sequence belongs to the NifD/NifK/NifE/NifN family. In terms of assembly, hexamer of two alpha, two beta, and two delta chains. [8Fe-7S] cluster is required as a cofactor.

The catalysed reaction is N2 + 8 reduced [2Fe-2S]-[ferredoxin] + 16 ATP + 16 H2O = H2 + 8 oxidized [2Fe-2S]-[ferredoxin] + 2 NH4(+) + 16 ADP + 16 phosphate + 6 H(+). This iron-iron protein is part of the nitrogenase complex that catalyzes the key enzymatic reactions in nitrogen fixation. Other nitrogenase complexes utilize a molybdenum-iron protein or a vanadium-iron protein. In Ruminiclostridium hungatei (Clostridium hungatei), this protein is Nitrogenase iron-iron protein beta chain (anfK).